Reading from the N-terminus, the 516-residue chain is MSIVSSVAFVPRGYASEFPKSYDIDEIEYERINQLSKLKLEDARADLQSSMEDSNKANGNGEETTDGAEGVLQTSEEVDDELKVYNLDTYDDDEEEAETEGPAAMFSNIRGLAYHENGEKDPYITIDPQEQDDLEREEMQILPTDSLLLAARTEDNLSHVEVYVYEPTEENLYVHHDFLLPTFPLCLEWLDYKVGTSDNAPGNYVAVGTFDPEIEIWDLDIIDAVYPAAVLGAGASQVNKKKKKSKKINDSYHTDAVLALSSNRNAHNLLVSGSADTTLKLWDLSTCNCVKSFTYHSDKVSCLDWYSKAPSVLLSGSYDKTAKIADLRLEEAPSSFQVTSDVENVAWDQHSENNFFIGTDNGIVYYCDARNLSKSVWQLQAHDGPISCLSVNPSVPSFVATGSTDRVVKLWNTSDSSPKMVVSRDLDVGRVFTCSFTTDESTAFHLAASGSKGVVRVWDTATNPGVRKAFESRVTEEVTKKERIVQLEDRGAGEDSSDDDDYEDIEDDDDQDAEMS.

At S21 the chain carries Phosphoserine. Residues 46-74 (DLQSSMEDSNKANGNGEETTDGAEGVLQT) form a disordered region. The span at 47 to 62 (LQSSMEDSNKANGNGE) shows a compositional bias: polar residues. WD repeat units follow at residues 182–227 (TFPL…AVYP), 252–292 (YHTD…CVKS), 295–335 (YHSD…APSS), 337–377 (QVTS…KSVW), 381–421 (AHDG…PKMV), and 426–468 (LDVG…GVRK). Residues 482–493 (ERIVQLEDRGAG) are compositionally biased toward basic and acidic residues. Residues 482-516 (ERIVQLEDRGAGEDSSDDDDYEDIEDDDDQDAEMS) are disordered. Acidic residues predominate over residues 495-516 (DSSDDDDYEDIEDDDDQDAEMS). A phosphoserine mark is found at S496 and S497.

Its subcellular location is the cytoplasm. It is found in the nucleus. The protein resides in the nucleolus. This is an uncharacterized protein from Schizosaccharomyces pombe (strain 972 / ATCC 24843) (Fission yeast).